The sequence spans 277 residues: MKDKFYELSIKTSNFYDEILELVFSFGVTCVEELDHEIIIREEYDLKDIAWGVEEYAKGLSSVRKISNDLKISLNLKENKDWLGEYKRAVKPILVDKIYIRPSWEESLSGVTNIIIDPALAFGSGHHESTNSCLQLLQKYAKSGDTALDVGCGSGILSIALAKLGCKVDACDTDEQATQSSLSNAQLNEVKFNKIWTGSIANLEQKYDIVVANIIADVIFMLSNDLKKSLKKGGYLVLSGILNKYEDRIKDTFKDLELVEIKQANDWVSFVYKEMDE.

Positions 130, 151, 172, and 213 each coordinate S-adenosyl-L-methionine.

This sequence belongs to the methyltransferase superfamily. PrmA family.

It localises to the cytoplasm. The enzyme catalyses L-lysyl-[protein] + 3 S-adenosyl-L-methionine = N(6),N(6),N(6)-trimethyl-L-lysyl-[protein] + 3 S-adenosyl-L-homocysteine + 3 H(+). Methylates ribosomal protein L11. In Campylobacter concisus (strain 13826), this protein is Ribosomal protein L11 methyltransferase.